A 623-amino-acid chain; its full sequence is DEAD-box ATP-dependent RNA helicase 52C (623 aa).

The interval 1-120 is disordered; that stretch reads MATPSRTSWA…DGDAAAGAGD (120 aa). Residues 10–29 show a composition bias toward low complexity; it reads ADVADADPAPAPAPAANGPA. The span at 54–69 shows a compositional bias: pro residues; it reads APPPSSSSSSAPPPRA. The span at 70–83 shows a compositional bias: low complexity; that stretch reads APGLLAPRPAAAGM. Residues 84–97 are compositionally biased toward gly residues; that stretch reads GRMGGGGGGGGFGG. Residues 155–183 carry the Q motif motif; sequence GTFAEIDLGQALNDNIRRCKYVRPTPVQR. The region spanning 186 to 372 is the Helicase ATP-binding domain; sequence IPISLAGRDL…SDFLENYIFL (187 aa). Residue 199–206 coordinates ATP; sequence AQTGSGKT. The DEAD box motif lies at 316 to 319; sequence DEAD. The region spanning 399–550 is the Helicase C-terminal domain; it reads HLMDLLHAQR…EVPAWLSRYA (152 aa). Positions 553–595 are disordered; it reads PSYGGGGGRNRRSGGGSRFGGRDFRRDSSSGRGGGDYYGGGSS. A compositionally biased stretch (gly residues) spans 555 to 571; that stretch reads YGGGGGRNRRSGGGSRF. Residues 572-581 show a composition bias toward basic and acidic residues; that stretch reads GGRDFRRDSS. Residues 583-595 are compositionally biased toward gly residues; sequence GRGGGDYYGGGSS.

Belongs to the DEAD box helicase family. DDX3/DED1 subfamily.

It catalyses the reaction ATP + H2O = ADP + phosphate + H(+). The chain is DEAD-box ATP-dependent RNA helicase 52C from Oryza sativa subsp. japonica (Rice).